Consider the following 316-residue polypeptide: Lipooligosaccharide heptosyltransferase 2 (316 aa).

This sequence belongs to the glycosyltransferase 9 family.

The catalysed reaction is an L-alpha-D-Hep-(1-&gt;5)-[alpha-Kdo-(2-&gt;4)]-alpha-Kdo-(2-&gt;6)-lipid A + ADP-L-glycero-beta-D-manno-heptose = an L-alpha-D-Hep-(1-&gt;3)-L-alpha-D-Hep-(1-&gt;5)-[alpha-Kdo-(2-&gt;4)]-alpha-Kdo-(2-&gt;6)-lipid A + ADP + H(+). Its pathway is bacterial outer membrane biogenesis; LOS core biosynthesis. In terms of biological role, glycosyltransferase involved in the biosynthesis of the core oligosaccharide region of lipooligosaccharide (LOS). Catalyzes the addition of the second heptose unit to the heptosyl-Kdo2-lipid A module. The chain is Lipooligosaccharide heptosyltransferase 2 from Campylobacter jejuni subsp. jejuni serotype O:6 (strain 81116 / NCTC 11828).